A 496-amino-acid polypeptide reads, in one-letter code: Coiled-coil domain-containing protein 77 (496 aa).

Residues 1 to 42 (MDFSPPHGLRGGRSPSLQDTTISSSHTQKNGGDSTPLPPINE) are disordered. The span at 15 to 33 (PSLQDTTISSSHTQKNGGD) shows a compositional bias: polar residues. The stretch at 51-113 (RELLEYYRKK…KALSDMQVYL (63 aa)) forms a coiled coil. Residues 170–208 (QRTVQSGDPFDRKVQRSGRAGVKQVPLKAPGKQDRTKAA) form a disordered region. Residues 214-495 (QILLLQVEAL…IYGLENELRI (282 aa)) adopt a coiled-coil conformation.

This is Coiled-coil domain-containing protein 77 (ccdc77) from Xenopus laevis (African clawed frog).